The sequence spans 320 residues: ADP/ATP translocase 4 (320 aa).

Over 1-20 (MSNESSKKQSSKKALFDPVS) the chain is Mitochondrial intermembrane. Residues 19 to 111 (VSFSKDLLAG…FAFKDKYKEL (93 aa)) form a Solcar 1 repeat. Residues 21–50 (FSKDLLAGGVAAAVSKTAVAPIERVKLLLQ) traverse the membrane as a helical segment. Residues 51 to 87 (VQASSKQISPEARYKGMLDCLVRIPREQGFLSYWRGN) lie on the Mitochondrial matrix side of the membrane. A helical transmembrane segment spans residues 88 to 112 (LANVIRYFPTQALNFAFKDKYKELF). The ADP site is built by Arg-93 and Lys-105. The Mitochondrial intermembrane portion of the chain corresponds to 113-122 (MSGVNKEKQF). Residues 123–143 (WRWFLANLASGGAAGATSLCV) traverse the membrane as a helical segment. Solcar repeat units follow at residues 124-214 (RWFL…VKGL) and 221-308 (TPFL…IKEF). The Mitochondrial matrix segment spans residues 144-191 (VYPLDFARTRLGVDIGKGPEQRQFTGLGDCIMKIAKSDGLIGLYQGFG). The chain crosses the membrane as a helical span at residues 192-212 (VSVQGIIVYRASYFGAYDTVK). The Mitochondrial intermembrane portion of the chain corresponds to 213–223 (GLLPKPKETPF). The chain crosses the membrane as a helical span at residues 224–244 (LVSFIIAQIVTTCSGILSYPF). At 245–284 (DTVRRRMMMQSGESDRQYKGTIDCFLKIYRHEGVPAFFRG) the chain is on the mitochondrial matrix side. Arg-248 contributes to the ADP binding site. The interval 248 to 253 (RRRMMM) is important for transport activity. Residues 248-253 (RRRMMM) carry the Nucleotide carrier signature motif motif. Residues 285 to 302 (AFSNILRGTGGALVLVLY) form a helical membrane-spanning segment. The Mitochondrial intermembrane portion of the chain corresponds to 303 to 320 (DKIKEFLNIDVGGSSSGD).

This sequence belongs to the mitochondrial carrier (TC 2.A.29) family. Monomer. In terms of tissue distribution, specifically expressed in undifferentiated embryonic stem cells and germ cells. Expression is down-regulated after embryonic stem cells differentiation. In adults, only expressed in developing gametes in testis. In testis, expressed at higher level in spermatocytes. Expression is probably associated with entry of the male germ cells into meiosis. Expressed at very low level in Sertoli cells.

The protein resides in the mitochondrion inner membrane. The protein localises to the membrane. It is found in the cell projection. It localises to the cilium. Its subcellular location is the flagellum membrane. It catalyses the reaction ADP(in) + ATP(out) = ADP(out) + ATP(in). The catalysed reaction is dATP(out) + ADP(in) = dATP(in) + ADP(out). It carries out the reaction dADP(in) + ADP(out) = dADP(out) + ADP(in). The enzyme catalyses H(+)(in) = H(+)(out). The matrix-open state (m-state) is inhibited by the membrane-permeable bongkrekic acid (BKA). The cytoplasmic-open state (c-state) is inhibited by the membrane-impermeable toxic inhibitor carboxyatractyloside (CATR). Proton transporter activity is inhibited by ADP:ATP antiporter activity. ADP:ATP antiporter that mediates import of ADP into the mitochondrial matrix for ATP synthesis, and export of ATP out to fuel the cell. Cycles between the cytoplasmic-open state (c-state) and the matrix-open state (m-state): operates by the alternating access mechanism with a single substrate-binding site intermittently exposed to either the cytosolic (c-state) or matrix (m-state) side of the inner mitochondrial membrane. Specifically required during spermatogenesis, probably to mediate ADP:ATP exchange in spermatocytes. Large ATP supplies from mitochondria may be critical for normal progression of spermatogenesis during early stages of meiotic prophase I, including DNA double-strand break repair and chromosomal synapsis. In addition to its ADP:ATP antiporter activity, also involved in mitochondrial uncoupling and mitochondrial permeability transition pore (mPTP) activity. Plays a role in mitochondrial uncoupling by acting as a proton transporter: proton transport uncouples the proton flows via the electron transport chain and ATP synthase to reduce the efficiency of ATP production and cause mitochondrial thermogenesis. Proton transporter activity is inhibited by ADP:ATP antiporter activity, suggesting that SLC25A31/ANT4 acts as a master regulator of mitochondrial energy output by maintaining a delicate balance between ATP production (ADP:ATP antiporter activity) and thermogenesis (proton transporter activity). Proton transporter activity requires free fatty acids as cofactor, but does not transport it. Among nucleotides, may also exchange ADP for dATP and dADP. Also plays a key role in mPTP opening, a non-specific pore that enables free passage of the mitochondrial membranes to solutes of up to 1.5 kDa, and which contributes to cell death. It is however unclear if SLC25A31/ANT4 constitutes a pore-forming component of mPTP or regulates it. This chain is ADP/ATP translocase 4, found in Mus musculus (Mouse).